We begin with the raw amino-acid sequence, 702 residues long: Ferrioxamine B receptor (702 aa).

A signal peptide spans Met-1 to Ala-30. Residues Pro-55–Arg-168 form the TBDR plug domain. Residues Asp-173–Phe-702 form the TBDR beta-barrel domain.

The protein belongs to the TonB-dependent receptor family.

It is found in the cell outer membrane. Ferrioxamine binding and uptake, in association with the TonB protein. May play a role in intestinal colonization. In Salmonella typhimurium (strain SL1344), this protein is Ferrioxamine B receptor (foxA).